Reading from the N-terminus, the 155-residue chain is MPRRREVPKRKVLPDPKYGSEVLTKFVNMVMSDGKRSVAERILYGALERIGSKHDDPIEVMETALENVKPRVEVKSRRVGGATYQVPVEVRPERRQTLAMRWLLEAARKRGEKTMAARMANEMLEAAESRGTAVKKREDTHRMAEANKAFSHYRW.

Belongs to the universal ribosomal protein uS7 family. As to quaternary structure, part of the 30S ribosomal subunit. Contacts proteins S9 and S11.

In terms of biological role, one of the primary rRNA binding proteins, it binds directly to 16S rRNA where it nucleates assembly of the head domain of the 30S subunit. Is located at the subunit interface close to the decoding center, probably blocks exit of the E-site tRNA. The sequence is that of Small ribosomal subunit protein uS7 from Halorhodospira halophila (strain DSM 244 / SL1) (Ectothiorhodospira halophila (strain DSM 244 / SL1)).